Reading from the N-terminus, the 206-residue chain is Cytochrome c biogenesis ATP-binding export protein CcmA (206 aa).

An ABC transporter domain is found at 3 to 206; the sequence is VSVDDLCVTR…LAGASDEAFL (204 aa). 35–42 contacts ATP; the sequence is GPNGSGKT.

Belongs to the ABC transporter superfamily. CcmA exporter (TC 3.A.1.107) family. As to quaternary structure, the complex is composed of two ATP-binding proteins (CcmA) and two transmembrane proteins (CcmB).

It localises to the cell inner membrane. It catalyses the reaction heme b(in) + ATP + H2O = heme b(out) + ADP + phosphate + H(+). Part of the ABC transporter complex CcmAB involved in the biogenesis of c-type cytochromes; once thought to export heme, this seems not to be the case, but its exact role is uncertain. Responsible for energy coupling to the transport system. The protein is Cytochrome c biogenesis ATP-binding export protein CcmA of Roseobacter denitrificans (strain ATCC 33942 / OCh 114) (Erythrobacter sp. (strain OCh 114)).